The sequence spans 238 residues: Lipoprotein-releasing system ATP-binding protein LolD (238 aa).

Residues 6–238 form the ABC transporter domain; that stretch reads LVCQGIRKVY…RSSLAQEMEA (233 aa). Position 42–49 (42–49) interacts with ATP; that stretch reads GSSGSGKS.

It belongs to the ABC transporter superfamily. Lipoprotein translocase (TC 3.A.1.125) family. In terms of assembly, the complex is composed of two ATP-binding proteins (LolD) and two transmembrane proteins (LolC and LolE).

It is found in the cell inner membrane. Part of the ABC transporter complex LolCDE involved in the translocation of mature outer membrane-directed lipoproteins, from the inner membrane to the periplasmic chaperone, LolA. Responsible for the formation of the LolA-lipoprotein complex in an ATP-dependent manner. The polypeptide is Lipoprotein-releasing system ATP-binding protein LolD (Aliivibrio fischeri (strain ATCC 700601 / ES114) (Vibrio fischeri)).